The chain runs to 371 residues: Proton-coupled zinc antiporter SLC30A2 (371 aa).

Over 1–69 (MQTMDKQNLL…DPEKQRARRK (69 aa)) the chain is Cytoplasmic. Residues 47-50 (HYCH) carry the Mitochondrial localization signal motif. C49 provides a ligand contact to Zn(2+). A helical transmembrane segment spans residues 70 to 90 (LYVASAICLVFMIGEIIGGYL). The Lumenal segment spans residues 91–99 (AQSLAIMTD). The helical transmembrane segment at 100–120 (AAHLLTDFASMLISLFALWVS) threads the bilayer. H102 and D106 together coordinate Zn(2+). Topologically, residues 121 to 136 (SRPATKTMNFGWHRAE) are cytoplasmic. The helical transmembrane segment at 137-157 (ILGALLSVLSIWVVTGVLVYL) threads the bilayer. The Lumenal segment spans residues 158 to 172 (AVQRLISGDYEIKGD). A helical transmembrane segment spans residues 173–193 (TMLITSGCAVAVNLIMGLALH). The Cytoplasmic portion of the chain corresponds to 194–219 (QSGHGHSHGNSRDDSSQQQNPSVRAA). A helical transmembrane segment spans residues 220-240 (FIHVIGDLLQSVGVLVAAYII). Residues H222 and D226 each coordinate Zn(2+). Over 241 to 248 (YFKPEYKY) the chain is Lumenal. A helical membrane pass occupies residues 249–269 (VDPICTFLFSILVLGTTLTIL). At 270–303 (RDVILVLMEGTPKGVDFTTVKNLLLSVDGVEALH) the chain is on the cytoplasmic side. Residues 293-294 (LL) carry the Lysosomal targeting motif motif. A Phosphoserine modification is found at S295. The Zn(2+) site is built by H303, H320, and E354. The helical transmembrane segment at 304-324 (SLHIWALTVAQPVLSVHIAIA) threads the bilayer. Residues 325 to 371 (QNADAQAVLKVARDRLQGKFNFHTMTIQIEKYSEDMKNCQACQGPLE) lie on the Lumenal side of the membrane.

It belongs to the cation diffusion facilitator (CDF) transporter (TC 2.A.4) family. SLC30A subfamily. As to quaternary structure, homodimer. Interacts (via lysosomal targeting motif) with AP3D1; in AP-3-mediated transport to lysosomes. Interacts with TMEM163. Post-translationally, phosphorylated at Ser-295. Phosphorylation at Ser-295 prevents localization to lysosomes. Dephosphorylation of Ser-295 which triggers localization to lysosomes, accumulation of zinc into lysosomes and lysosomal-mediated cell death is induced by TNF-alpha.

It localises to the cytoplasmic vesicle. The protein resides in the secretory vesicle membrane. The protein localises to the zymogen granule membrane. It is found in the endosome membrane. Its subcellular location is the lysosome membrane. It localises to the mitochondrion inner membrane. The protein resides in the cell membrane. It carries out the reaction Zn(2+)(in) + 2 H(+)(out) = Zn(2+)(out) + 2 H(+)(in). Its function is as follows. Electroneutral proton-coupled antiporter concentrating zinc ions into a variety of intracellular organelles including endosomes, zymogen granules and mitochondria. Thereby, plays a crucial role in cellular zinc homeostasis to confer upon cells protection against its potential cytotoxicity. Regulates the zinc concentration of milk, through the transport of zinc ions into secretory vesicles of mammary cells. By concentrating zinc ions into lysosomes participates to lysosomal-mediated cell death during early mammary gland involution. In terms of biological role, electroneutral proton-coupled antiporter mediating the efflux of zinc ions through the plasma membrane. The polypeptide is Proton-coupled zinc antiporter SLC30A2 (Mus musculus (Mouse)).